Here is a 498-residue protein sequence, read N- to C-terminus: GTPase Der (498 aa).

2 consecutive EngA-type G domains span residues Pro-3 to Leu-166 and Ile-212 to Thr-385. GTP is bound by residues Gly-9–Ser-16, Asp-56–Ile-60, Asn-118–Asp-121, Gly-218–Ser-225, Asp-265–Val-269, and Asn-330–Asp-333. Residues Lys-386–Asp-470 enclose the KH-like domain.

It belongs to the TRAFAC class TrmE-Era-EngA-EngB-Septin-like GTPase superfamily. EngA (Der) GTPase family. Associates with the 50S ribosomal subunit.

Its function is as follows. GTPase that plays an essential role in the late steps of ribosome biogenesis. This chain is GTPase Der, found in Tolumonas auensis (strain DSM 9187 / NBRC 110442 / TA 4).